Here is a 292-residue protein sequence, read N- to C-terminus: Ribosomal protein L11 methyltransferase (292 aa).

Residues Thr-144, Gly-165, Asp-187, and Asn-229 each contribute to the S-adenosyl-L-methionine site.

Belongs to the methyltransferase superfamily. PrmA family.

It is found in the cytoplasm. The enzyme catalyses L-lysyl-[protein] + 3 S-adenosyl-L-methionine = N(6),N(6),N(6)-trimethyl-L-lysyl-[protein] + 3 S-adenosyl-L-homocysteine + 3 H(+). Functionally, methylates ribosomal protein L11. This Pseudomonas syringae pv. tomato (strain ATCC BAA-871 / DC3000) protein is Ribosomal protein L11 methyltransferase.